The chain runs to 88 residues: UPF0223 protein BH2638 (88 aa).

Belongs to the UPF0223 family.

In Halalkalibacterium halodurans (strain ATCC BAA-125 / DSM 18197 / FERM 7344 / JCM 9153 / C-125) (Bacillus halodurans), this protein is UPF0223 protein BH2638.